The chain runs to 257 residues: MKFFVDLNSDIGEGYGAYKLGMDEEIMKCVTSVNCACGWHAGDPLIMDKTIKIAKENNVAVGAHPGYPDLLGFGRRKMVVTPDEARAYMLYQLGALNAFAKANETKLQHMKLHGAFYNMAAVEKDLADAVLDGIEQFDKDIIVMTLSGSYMAKEGKRRGLKVAEEVFADRGYNPDGTLVNRNLPGAFVKEPDEAIARVIKMIKTKKVTAVNGEEIDIAADSICVHGDNPKAIEFVDRIRKSLIADGIEVKSLYEFIK.

This sequence belongs to the LamB/PxpA family. As to quaternary structure, forms a complex composed of PxpA, PxpB and PxpC.

It catalyses the reaction 5-oxo-L-proline + ATP + 2 H2O = L-glutamate + ADP + phosphate + H(+). Catalyzes the cleavage of 5-oxoproline to form L-glutamate coupled to the hydrolysis of ATP to ADP and inorganic phosphate. In Fusobacterium nucleatum subsp. nucleatum (strain ATCC 25586 / DSM 15643 / BCRC 10681 / CIP 101130 / JCM 8532 / KCTC 2640 / LMG 13131 / VPI 4355), this protein is 5-oxoprolinase subunit A.